The following is a 275-amino-acid chain: uncharacterized protein (275 aa).

6 consecutive transmembrane segments (helical) span residues 25-45 (LGYF…FMTA), 70-90 (LLFF…LSAI), 107-127 (IGNF…LRFV), 149-169 (FGQW…IVQF), 203-223 (IARA…AMTA), and 247-267 (ILSI…MKGI).

It localises to the cell membrane. This is an uncharacterized protein from Bacillus subtilis (strain 168).